The primary structure comprises 135 residues: L-ectoine synthase (135 aa).

Belongs to the ectoine synthase family.

The enzyme catalyses (2S)-4-acetamido-2-aminobutanoate = L-ectoine + H2O. Its pathway is amine and polyamine biosynthesis; ectoine biosynthesis; L-ectoine from L-aspartate 4-semialdehyde: step 3/3. Catalyzes the circularization of gamma-N-acetyl-alpha,gamma-diaminobutyric acid (ADABA) to ectoine (1,4,5,6-tetrahydro-2-methyl-4-pyrimidine carboxylic acid), which is an excellent osmoprotectant. The chain is L-ectoine synthase from Hyphomonas neptunium (strain ATCC 15444).